Consider the following 272-residue polypeptide: Tryptophan synthase alpha chain (272 aa).

Residues Glu49 and Asp60 each act as proton acceptor in the active site.

It belongs to the TrpA family. Tetramer of two alpha and two beta chains.

It carries out the reaction (1S,2R)-1-C-(indol-3-yl)glycerol 3-phosphate + L-serine = D-glyceraldehyde 3-phosphate + L-tryptophan + H2O. The protein operates within amino-acid biosynthesis; L-tryptophan biosynthesis; L-tryptophan from chorismate: step 5/5. Its function is as follows. The alpha subunit is responsible for the aldol cleavage of indoleglycerol phosphate to indole and glyceraldehyde 3-phosphate. This chain is Tryptophan synthase alpha chain, found in Psychrobacter cryohalolentis (strain ATCC BAA-1226 / DSM 17306 / VKM B-2378 / K5).